Reading from the N-terminus, the 576-residue chain is Citrinin biosynthesis transcriptional activator ctnR (576 aa).

Residues 1–27 form a disordered region; sequence MLSHEMASTAHRQPSRPTTRQRQRTGR. A DNA-binding region (zn(2)-C6 fungal-type) is located at residues 29–56; it reads CEECRRRKLRCDGQQPRCGVCVDSGVTC. The tract at residues 102 to 148 is disordered; that stretch reads STPLTNDHHDGCSVSSASSRSDSNPPPTVSEPDMSLPNTTTSVSSAP. Low complexity predominate over residues 114–124; sequence SVSSASSRSDS. A compositionally biased stretch (polar residues) spans 137-148; sequence LPNTTTSVSSAP.

The protein localises to the nucleus. Transcription factor that regulates the expression of the gene cluster that mediates the biosynthesis of the mycotoxin citrinin, a hepato-nephrotoxic compound to humans due to inhibition of respiration complex III. This chain is Citrinin biosynthesis transcriptional activator ctnR, found in Monascus purpureus (Red mold).